The sequence spans 196 residues: GTP cyclohydrolase-2 (196 aa).

49-53 (RVHSE) provides a ligand contact to GTP. Positions 54, 65, and 67 each coordinate Zn(2+). Residues Gln70, 92–94 (EGR), and Thr114 contribute to the GTP site. Asp126 functions as the Proton acceptor in the catalytic mechanism. The active-site Nucleophile is the Arg128. Positions 149 and 154 each coordinate GTP.

Belongs to the GTP cyclohydrolase II family. Homodimer. Zn(2+) serves as cofactor.

The enzyme catalyses GTP + 4 H2O = 2,5-diamino-6-hydroxy-4-(5-phosphoribosylamino)-pyrimidine + formate + 2 phosphate + 3 H(+). Its pathway is cofactor biosynthesis; riboflavin biosynthesis; 5-amino-6-(D-ribitylamino)uracil from GTP: step 1/4. Its function is as follows. Catalyzes the conversion of GTP to 2,5-diamino-6-ribosylamino-4(3H)-pyrimidinone 5'-phosphate (DARP), formate and pyrophosphate. The polypeptide is GTP cyclohydrolase-2 (Yersinia pestis).